The primary structure comprises 234 residues: HTH-type transcriptional regulator ArcR (234 aa).

A nucleoside 3',5'-cyclic phosphate is bound at residue 40 to 129 (VRHYTKGQVI…MAFLCKANDD (90 aa)). The 74-residue stretch at 155–228 (KFAKDRIIKL…HKNWLVSKHL (74 aa)) folds into the HTH crp-type domain. Positions 188-207 (IQLMSDMAGISRETAGHIIH) form a DNA-binding region, H-T-H motif.

It is found in the cytoplasm. In terms of biological role, positively regulates the expression of the arcABDCR operon under anaerobic conditions, thus playing an essential role in arginine catabolism. May also control the expression of genes encoding proteins which are involved in anaerobic metabolism. Can bind cyclic AMP. This chain is HTH-type transcriptional regulator ArcR (arcR), found in Staphylococcus aureus (strain Mu50 / ATCC 700699).